The chain runs to 338 residues: Delta(9)-fatty-acid desaturase fat-7 (338 aa).

The next 4 helical transmembrane spans lie at 51–71 (VALFAALHVAAAIGLYELVFH), 76–96 (TAVFSFALYVFSGFGITAGAH), 194–214 (YFPLVILFCFILPTIIPVYFW), and 218–238 (AFIAFYVAGTFRYCFTLHATW).

Belongs to the fatty acid desaturase type 1 family. Expressed in the intestine in adult worms and in all four larval stages.

The protein resides in the membrane. The catalysed reaction is octadecanoyl-CoA + 2 Fe(II)-[cytochrome b5] + O2 + 2 H(+) = (9Z)-octadecenoyl-CoA + 2 Fe(III)-[cytochrome b5] + 2 H2O. It catalyses the reaction hexadecanoyl-CoA + 2 Fe(II)-[cytochrome b5] + O2 + 2 H(+) = (9Z)-hexadecenoyl-CoA + 2 Fe(III)-[cytochrome b5] + 2 H2O. The enzyme catalyses heptadecanoyl-CoA + 2 Fe(II)-[cytochrome b5] + O2 + 2 H(+) = (9Z)-heptadecenoyl-CoA + 2 Fe(III)-[cytochrome b5] + 2 H2O. It carries out the reaction (11E)-octadecenoyl-CoA + 2 Fe(II)-[cytochrome b5] + O2 + 2 H(+) = (9Z,11E)-octadecadienoyl-CoA + 2 Fe(III)-[cytochrome b5] + 2 H2O. It participates in lipid metabolism; monounsaturated fatty acid biosynthesis. It functions in the pathway lipid metabolism; fatty acid metabolism. Functionally, delta(9)-fatty acid desaturase that acts preferentially on stearoyl-CoA (octadecanoyl-CoA) producing the monounsaturated oleoyl-CoA ((9Z)-octadecenoyl-CoA), one of the most abundant monounsaturated fatty acid in Caenorhabditis elegans phospholipids and triacylglycerols. Also acts on palmitoyl-CoA (hexadecanoyl-CoA), heptadecanoyl-CoA and (11E)-octadecenoyl-CoA (trans-vaccenoyl-CoA), the monounsaturated fatty acids (MUFAs) produced are further used by several other desaturases and elongases as substrates to synthesize polyunsaturated fatty acids (PUFAs) endogenously (PUFAs are essential for membrane structure and many cellular and physiological processes). Unlike plants, Caenorhabditis elegans desaturases seem to use fatty acyl-CoAs as substrates. Partially inhibits expression of genes involved in beta-oxidation, such as ech-1 and acs-2, perhaps signaling via the actions of one of its fatty acid products. May form part of a negative feedback loop with the transcription factor nhr-49 to limit beta-oxidation, in which nhr-49 stimulates expression of fat-7 and acs-2, and in turn fat-7 indirectly inhibits acs-2 and other genes also involved in beta-oxidation. The protein is Delta(9)-fatty-acid desaturase fat-7 (fat-7) of Caenorhabditis elegans.